The chain runs to 761 residues: Cyclin-F (761 aa).

A Nuclear localization signal 1 motif is present at residues 19–27; that stretch reads RRRIKRRPR. The F-box domain occupies 28 to 75; it reads VLTLLSLPEDVLLYVLECLPAVDILSMREVHPHLRSLVDSHSSVWARA. The region spanning 300–411 is the Cyclin N-terminal domain; sequence NKSSIFTTQK…EIISALEGKI (112 aa). Short sequence motifs (d box) lie at residues 316-319 and 355-358; these read RYIL and RAKL. Disordered stretches follow at residues 575–594 and 677–761; these read NKTKRRREESIQEDRGSFVT and AENG…SDEL. Basic and acidic residues predominate over residues 580–590; the sequence is RREESIQEDRG. Residues 589–745 are PEST; the sequence is RGSFVTTPTA…LLKASRRQVK (157 aa). Low complexity predominate over residues 691–718; the sequence is SSGYSSVSSGGSPTSSSSPGLPFTPTPG. Residues 739 to 749 are compositionally biased toward basic residues; sequence ASRRQVKRKNQ.

It belongs to the cyclin family. Cyclin AB subfamily. Component of the SCF(CCNF) complex.

It is found in the nucleus. Its subcellular location is the cytoplasm. It localises to the perinuclear region. The protein localises to the cytoskeleton. The protein resides in the microtubule organizing center. It is found in the centrosome. Its subcellular location is the centriole. Its function is as follows. Substrate recognition component of the SCF(CCNF) E3 ubiquitin-protein ligase complex which mediates the ubiquitination and subsequent proteasomal degradation of target proteins. The SCF(CCNF) E3 ubiquitin-protein ligase complex is an integral component of the ubiquitin proteasome system (UPS) and links proteasome degradation to the cell cycle. Mediates the substrate recognition and the proteasomal degradation of various target proteins during G2 phase involved in the regulation of cell cycle progression and in the maintenance of genome stability. This chain is Cyclin-F (ccnf), found in Xenopus laevis (African clawed frog).